Consider the following 89-residue polypeptide: Small ribosomal subunit protein uS15 (89 aa).

It belongs to the universal ribosomal protein uS15 family. As to quaternary structure, part of the 30S ribosomal subunit. Forms a bridge to the 50S subunit in the 70S ribosome, contacting the 23S rRNA.

One of the primary rRNA binding proteins, it binds directly to 16S rRNA where it helps nucleate assembly of the platform of the 30S subunit by binding and bridging several RNA helices of the 16S rRNA. Its function is as follows. Forms an intersubunit bridge (bridge B4) with the 23S rRNA of the 50S subunit in the ribosome. The chain is Small ribosomal subunit protein uS15 from Rhizorhabdus wittichii (strain DSM 6014 / CCUG 31198 / JCM 15750 / NBRC 105917 / EY 4224 / RW1) (Sphingomonas wittichii).